The following is a 181-amino-acid chain: Large ribosomal subunit protein uL6 (181 aa).

It belongs to the universal ribosomal protein uL6 family. In terms of assembly, part of the 50S ribosomal subunit.

Its function is as follows. This protein binds to the 23S rRNA, and is important in its secondary structure. It is located near the subunit interface in the base of the L7/L12 stalk, and near the tRNA binding site of the peptidyltransferase center. This Vesicomyosocius okutanii subsp. Calyptogena okutanii (strain HA) protein is Large ribosomal subunit protein uL6.